The chain runs to 1012 residues: Translation initiation factor IF-2, chloroplastic (1012 aa).

A compositionally biased stretch (low complexity) spans 75–102 (GNSVSLDSNSNSSSSSKSGGDDGTGFVL). Disordered regions lie at residues 75–132 (GNSV…VEER), 147–294 (EKLG…KEKK), and 319–340 (APPKPGKAPSPGKFKDDFRKKG). The segment covering 152–175 (SKVNGDKNNGSVNKPVRNNANASP) has biased composition (polar residues). The segment covering 183–194 (SAASLKSKTLKS) has biased composition (low complexity). Residues 208 to 231 (VVKEVPKPSYNKNEEEKSQTRGGE) are compositionally biased toward basic and acidic residues. Residues 240–257 (PQPPSKPQPLKPQQPSKP) are compositionally biased toward pro residues. The segment covering 277–294 (VLRDKGAAETSVKSKEKK) has biased composition (basic and acidic residues). In terms of domain architecture, tr-type G spans 488–661 (DRPPVITIMG…MLVAELQELK (174 aa)). Residues 497–504 (GHVDHGKT) are G1. 497–504 (GHVDHGKT) serves as a coordination point for GTP. Residues 522 to 526 (GITQG) are G2. The segment at 547–550 (DTPG) is G3. Residues 547 to 551 (DTPGH) and 601 to 604 (NKID) contribute to the GTP site. The interval 601–604 (NKID) is G4. The G5 stretch occupies residues 637-639 (SAL).

This sequence belongs to the TRAFAC class translation factor GTPase superfamily. Classic translation factor GTPase family. IF-2 subfamily.

The protein localises to the plastid. It is found in the chloroplast. Functionally, one of the essential components for the initiation of protein synthesis. Protects formylmethionyl-tRNA from spontaneous hydrolysis and promotes its binding to the 30S ribosomal subunits. Also involved in the hydrolysis of GTP during the formation of the 70S ribosomal complex. The polypeptide is Translation initiation factor IF-2, chloroplastic (IF2CP) (Phaseolus vulgaris (Kidney bean)).